Reading from the N-terminus, the 103-residue chain is Urease subunit gamma (103 aa).

This sequence belongs to the urease gamma subunit family. As to quaternary structure, heterotrimer of UreA (gamma), UreB (beta) and UreC (alpha) subunits. Three heterotrimers associate to form the active enzyme.

It is found in the cytoplasm. The enzyme catalyses urea + 2 H2O + H(+) = hydrogencarbonate + 2 NH4(+). Its pathway is nitrogen metabolism; urea degradation; CO(2) and NH(3) from urea (urease route): step 1/1. This Paracoccus denitrificans (strain Pd 1222) protein is Urease subunit gamma.